The following is a 452-amino-acid chain: Phosphoglucosamine mutase (452 aa).

The active-site Phosphoserine intermediate is the Ser103. Residues Ser103, Asp244, Asp246, and Asp248 each coordinate Mg(2+). At Ser103 the chain carries Phosphoserine.

The protein belongs to the phosphohexose mutase family. Mg(2+) is required as a cofactor. Post-translationally, activated by phosphorylation.

The enzyme catalyses alpha-D-glucosamine 1-phosphate = D-glucosamine 6-phosphate. Functionally, catalyzes the conversion of glucosamine-6-phosphate to glucosamine-1-phosphate. The polypeptide is Phosphoglucosamine mutase (Rhodospirillum rubrum (strain ATCC 11170 / ATH 1.1.1 / DSM 467 / LMG 4362 / NCIMB 8255 / S1)).